A 179-amino-acid chain; its full sequence is Cell division protein SepF (179 aa).

The tract at residues 22–55 (LPYEKRDEPVFTSVNSSQEPALPMNQPSQSAGTK) is disordered. Residues 33–55 (TSVNSSQEPALPMNQPSQSAGTK) are compositionally biased toward polar residues.

Belongs to the SepF family. In terms of assembly, homodimer. Interacts with FtsZ.

It is found in the cytoplasm. Cell division protein that is part of the divisome complex and is recruited early to the Z-ring. Probably stimulates Z-ring formation, perhaps through the cross-linking of FtsZ protofilaments. Its function overlaps with FtsA. The polypeptide is Cell division protein SepF (Streptococcus pneumoniae (strain Taiwan19F-14)).